A 300-amino-acid chain; its full sequence is Centromere protein O (300 aa).

Coiled-coil stretches lie at residues 18–42 (LAHL…QSVQ) and 83–109 (NQTV…QAYH). Ser-35 carries the phosphoserine modification.

This sequence belongs to the CENP-O/MCM21 family. In terms of assembly, component of the CENPA-CAD complex, composed of CENPI, CENPK, CENPL, CENPO, CENPP, CENPQ, CENPR and CENPS. The CENPA-CAD complex interacts with the CENPA-NAC complex, at least composed of CENPA, CENPC, CENPH, CENPM, CENPN, CENPT and CENPU.

The protein resides in the nucleus. It localises to the chromosome. Its subcellular location is the centromere. It is found in the kinetochore. Its function is as follows. Component of the CENPA-CAD (nucleosome distal) complex, a complex recruited to centromeres which is involved in assembly of kinetochore proteins, mitotic progression and chromosome segregation. May be involved in incorporation of newly synthesized CENPA into centromeres via its interaction with the CENPA-NAC complex. Modulates the kinetochore-bound levels of NDC80 complex. This chain is Centromere protein O (CENPO), found in Homo sapiens (Human).